A 311-amino-acid chain; its full sequence is tRNA dimethylallyltransferase (311 aa).

11-18 (GPTAVGKT) contributes to the ATP binding site. 13 to 18 (TAVGKT) lines the substrate pocket. An interaction with substrate tRNA region spans residues 36-39 (DSVQ).

It belongs to the IPP transferase family. As to quaternary structure, monomer. It depends on Mg(2+) as a cofactor.

The catalysed reaction is adenosine(37) in tRNA + dimethylallyl diphosphate = N(6)-dimethylallyladenosine(37) in tRNA + diphosphate. Catalyzes the transfer of a dimethylallyl group onto the adenine at position 37 in tRNAs that read codons beginning with uridine, leading to the formation of N6-(dimethylallyl)adenosine (i(6)A). The protein is tRNA dimethylallyltransferase of Exiguobacterium sp. (strain ATCC BAA-1283 / AT1b).